A 511-amino-acid polypeptide reads, in one-letter code: 2,3-bisphosphoglycerate-independent phosphoglycerate mutase (511 aa).

Residues Asp14 and Ser64 each coordinate Mn(2+). The active-site Phosphoserine intermediate is Ser64. Residues His125, 155 to 156, Arg187, Arg193, 259 to 262, and Lys333 contribute to the substrate site; these read RD and RADR. The Mn(2+) site is built by Asp400, His404, Asp441, His442, and His460.

The protein belongs to the BPG-independent phosphoglycerate mutase family. As to quaternary structure, monomer. Mn(2+) serves as cofactor.

The enzyme catalyses (2R)-2-phosphoglycerate = (2R)-3-phosphoglycerate. It participates in carbohydrate degradation; glycolysis; pyruvate from D-glyceraldehyde 3-phosphate: step 3/5. In terms of biological role, catalyzes the interconversion of 2-phosphoglycerate and 3-phosphoglycerate. This is 2,3-bisphosphoglycerate-independent phosphoglycerate mutase from Pseudoalteromonas atlantica (strain T6c / ATCC BAA-1087).